Reading from the N-terminus, the 247-residue chain is MIKLVLLRHGESQWNRENRFTGWHDIDLTDQGRIEASNAGKLLRAEGFTFDIAYTSVLKRAIRTLWHVLDEMDLMWLPVTKSWRLNERHYGALQGLNKAETAQKYGEEQVLVWRRSYDTPPPALEKSDARYPGSQARYASLSEAEVPLTECLKDTVARFLPLWHETIAPEIRKGRNVIIAAHGNSIRALVKYLDNVSEDDIVGINIPTGIPLVYELDDDLKPIRSYYLGDQDALKKAQEAVAKQGKA.

Substrate-binding positions include 8 to 15 (RHGESQWN), 21 to 22 (TG), arginine 60, 87 to 90 (ERHY), lysine 98, 114 to 115 (RR), and 183 to 184 (GN). The active-site Tele-phosphohistidine intermediate is histidine 9. Glutamate 87 (proton donor/acceptor) is an active-site residue.

It belongs to the phosphoglycerate mutase family. BPG-dependent PGAM subfamily.

The enzyme catalyses (2R)-2-phosphoglycerate = (2R)-3-phosphoglycerate. Its pathway is carbohydrate degradation; glycolysis; pyruvate from D-glyceraldehyde 3-phosphate: step 3/5. Catalyzes the interconversion of 2-phosphoglycerate and 3-phosphoglycerate. In Chlorobium chlorochromatii (strain CaD3), this protein is 2,3-bisphosphoglycerate-dependent phosphoglycerate mutase.